The sequence spans 150 residues: Large ribosomal subunit protein bL9 (150 aa).

It belongs to the bacterial ribosomal protein bL9 family.

Its function is as follows. Binds to the 23S rRNA. The polypeptide is Large ribosomal subunit protein bL9 (Staphylococcus aureus (strain NCTC 8325 / PS 47)).